Here is a 527-residue protein sequence, read N- to C-terminus: PTS system maltose-specific EIICB component (527 aa).

Positions 1-418 (MMQKIQRFGS…FNIATPGREK (418 aa)) constitute a PTS EIIC type-1 domain. The next 12 helical transmembrane spans lie at 8–28 (FGSAMFVPVLLFAFAGIIVGI), 59–79 (GWTVFNQMPLLFAIGIPVALA), 93–113 (VYLTFNYFVSAILTVWGGAFG), 132–152 (IKTLDTNIIGAIFISSIVVFL), 173–193 (YIVMISFFIMIPIALAVSYIW), 200–220 (IGSLQSFLVASGAVGVWIYTF), 224–244 (ILIPTGLHHFIYTPFIYGPAV), 276–296 (FALHGNSKIFGIPGIALAFYV), 305–325 (LVAGLLIPVTLTAIVAGITEP), 326–346 (IEFTFLFISPFLFAVHAVLAA), 357–377 (VVGNMGGGLIEAVTLNWIPLF), and 382–402 (MTYVYQILIGLSFTAIYFFVF). In terms of domain architecture, PTS EIIB type-1 spans 449-527 (DDTAFLYIEA…RERVEKILNQ (79 aa)). Cys-471 (phosphocysteine intermediate; for EIIB activity) is an active-site residue.

It localises to the cell membrane. The catalysed reaction is D-maltose(out) + N(pros)-phospho-L-histidyl-[protein] = alpha-maltose 6'-phosphate(in) + L-histidyl-[protein]. Functionally, the phosphoenolpyruvate-dependent sugar phosphotransferase system (sugar PTS), a major carbohydrate active transport system, catalyzes the phosphorylation of incoming sugar substrates concomitantly with their translocation across the cell membrane. This system is involved in maltose transport. This Bacillus subtilis (strain 168) protein is PTS system maltose-specific EIICB component.